The sequence spans 926 residues: Beta-mannosidase A (926 aa).

An N-terminal signal peptide occupies residues 1 to 21; that stretch reads MHVKAETVLALLTPAPPSVVG. N-linked (GlcNAc...) asparagine glycosylation is found at Asn40, Asn242, Asn277, Asn311, and Asn342. Glu474 functions as the Proton donor in the catalytic mechanism. 10 N-linked (GlcNAc...) asparagine glycosylation sites follow: Asn532, Asn603, Asn626, Asn653, Asn733, Asn756, Asn785, Asn793, Asn819, and Asn905.

The protein belongs to the glycosyl hydrolase 2 family. Beta-mannosidase A subfamily. In terms of assembly, homodimer.

It localises to the secreted. The enzyme catalyses Hydrolysis of terminal, non-reducing beta-D-mannose residues in beta-D-mannosides.. The protein operates within glycan metabolism; N-glycan degradation. Its function is as follows. Exoglycosidase that cleaves the single beta-linked mannose residue from the non-reducing end of beta-mannosidic oligosaccharides of various complexity and length. Involved in the degradation of polymeric mannan and galactomannan. This Aspergillus fumigatus (strain CBS 144.89 / FGSC A1163 / CEA10) (Neosartorya fumigata) protein is Beta-mannosidase A (mndA).